Consider the following 250-residue polypeptide: 2,3-bisphosphoglycerate-dependent phosphoglycerate mutase (250 aa).

Substrate-binding positions include 10–17, 23–24, R62, 89–92, K100, 116–117, and 185–186; these read RHGESQWN, TG, ERHY, RR, and GN. H11 serves as the catalytic Tele-phosphohistidine intermediate. E89 functions as the Proton donor/acceptor in the catalytic mechanism.

The protein belongs to the phosphoglycerate mutase family. BPG-dependent PGAM subfamily. Homodimer.

It carries out the reaction (2R)-2-phosphoglycerate = (2R)-3-phosphoglycerate. The protein operates within carbohydrate degradation; glycolysis; pyruvate from D-glyceraldehyde 3-phosphate: step 3/5. Catalyzes the interconversion of 2-phosphoglycerate and 3-phosphoglycerate. The sequence is that of 2,3-bisphosphoglycerate-dependent phosphoglycerate mutase from Salmonella paratyphi A (strain ATCC 9150 / SARB42).